Consider the following 369-residue polypeptide: MFCVAPPESEAKMNITKGGLVLFSANSNSSCMELSKKIAERLGVEMGKVQVYQEPDRETRVQIQESVRGKDVFIIQTVSKDVNTTIMELLIMVYACKTSCAKSIIGVVPYFPYSKQCKMRKRGSIVSKLLASMMCKAGLTHLITMDLHQKEIQGFFNIPVDNLRASPFLLQYIQEEIPDYRNAVIVAKSPASAKRAQSFAERLRLGIAVIHGEAQDAESDLVDGRHSPPMVRSAAAIHPSLEIPMLIPKEKPPITVVGDVGGRIAIIVDDIIDDVDSFLAAAETLKERGAYKIFVMATHGLLSSDAPLLIEESAIDEVVVTNTIPHEIQKLQCPKIKTVDISMTLSEAIRRIHNGESMSYLFRNIGLDD.

Residue M1 is modified to N-acetylmethionine. A phosphoserine mark is found at S219, S227, and S233.

The protein belongs to the ribose-phosphate pyrophosphokinase family. Binds to PRPS1 and PRPS2.

Functionally, seems to play a negative regulatory role in 5-phosphoribose 1-diphosphate synthesis. The protein is Phosphoribosyl pyrophosphate synthase-associated protein 2 (PRPSAP2) of Bos taurus (Bovine).